A 247-amino-acid polypeptide reads, in one-letter code: 5-oxoprolinase subunit A (247 aa).

This sequence belongs to the LamB/PxpA family. In terms of assembly, forms a complex composed of PxpA, PxpB and PxpC.

The enzyme catalyses 5-oxo-L-proline + ATP + 2 H2O = L-glutamate + ADP + phosphate + H(+). Its function is as follows. Catalyzes the cleavage of 5-oxoproline to form L-glutamate coupled to the hydrolysis of ATP to ADP and inorganic phosphate. The chain is 5-oxoprolinase subunit A from Histophilus somni (strain 129Pt) (Haemophilus somnus).